Reading from the N-terminus, the 464-residue chain is Glutamate--tRNA ligase (464 aa).

A 'HIGH' region motif is present at residues 11 to 21; the sequence is PSPTGYLHIGG. The short motif at 253–257 is the 'KMSKS' region element; it reads KLSKR. Lys256 contacts ATP.

It belongs to the class-I aminoacyl-tRNA synthetase family. Glutamate--tRNA ligase type 1 subfamily. In terms of assembly, monomer.

The protein localises to the cytoplasm. The catalysed reaction is tRNA(Glu) + L-glutamate + ATP = L-glutamyl-tRNA(Glu) + AMP + diphosphate. In terms of biological role, catalyzes the attachment of glutamate to tRNA(Glu) in a two-step reaction: glutamate is first activated by ATP to form Glu-AMP and then transferred to the acceptor end of tRNA(Glu). This Metamycoplasma arthritidis (strain 158L3-1) (Mycoplasma arthritidis) protein is Glutamate--tRNA ligase.